The chain runs to 511 residues: Immunoglobulin-binding protein EibD (511 aa).

Positions 1–26 (MSKKFTMTLLSSSLAGLLVMSGGVSA) are cleaved as a signal peptide. The interval 27 to 417 (QNGTYSVLQD…SKAIAANTRT (391 aa)) is surface exposed passenger domain. Topologically, residues 27-460 (QNGTYSVLQD…GLFQPYSVGK (434 aa)) are extracellular. Residues 161–287 (DAKASGEFSV…TGTESDKTYG (127 aa)) are head domain. The tract at residues 288 to 303 (TRVLGGLSDGTRNSDA) is neck. The right-handed coiled-coil (RHcc) stretch occupies residues 304–349 (ATVGQLNRKVGGVYDDVKARITVESEKQKKYTDQKTSEVNEKVEAR). Residues 304-349 (ATVGQLNRKVGGVYDDVKARITVESEKQKKYTDQKTSEVNEKVEAR) adopt a coiled-coil conformation. The segment at 329–344 (EKQKKYTDQKTSEVNE) is required to bind IgA. The interval 350–375 (TTVGVDSDGKLTRAEGATKTIAVNDG) is saddle domain. Positions 376–441 (LVALSGRTDR…INENHKEMKR (66 aa)) form a coiled coil. The tract at residues 376-441 (LVALSGRTDR…INENHKEMKR (66 aa)) is left-handed coiled-coil (LHcc). The interval 384 to 418 (DRIDYAVGAIDGRVTRNTQSIEKNSKAIAANTRTL) is required to bind IgG. Residues 418 to 460 (LQQHSARLDSQQRQINENHKEMKRAAAQSAALTGLFQPYSVGK) are outer membrane translocation of the passenger domain. 4 consecutive transmembrane segments (beta stranded) span residues 461 to 471 (FNATAAVGGYS), 474 to 485 (QALAVGVGYRFN), 488 to 497 (TAAKAGVAFS), and 501 to 511 (ASWNVGVNFEF). A translocator domain region spans residues 461 to 511 (FNATAAVGGYSDQQALAVGVGYRFNEQTAAKAGVAFSDGDASWNVGVNFEF).

This sequence belongs to the autotransporter-2 (AT-2) (TC 1.B.40) family. Eib subfamily. Homotrimer; can probably form mixed heterotrimers in vivo. Will form mixed heterotrimers with EibA or EibC; these are correctly located in the outer membrane and bind IgG Fc, although less well than homotrimers. In denaturing gels runs as a band of about 210 kDa. Binds the Fc portion of immunoglobulins; binds more than 1 Fc per subunit, can be modeled to bind 3 Fc per trimer.

The protein localises to the cell surface. It is found in the cell outer membrane. Functionally, binds (in a non-immune fashion) to the Fc portion of human IgA and IgG; binding occurs on the cell surface. Confers the ability to survive exposure to human serum exposure. Binds to the Fc portion of human IgG, IgA and to whole mouse antibodies also via Fc. Upon overexpression cells acquire an extra cell surface layer that forms a zipper-like contact between cells; cells autoagglutinate and form biofilm more readily, suggesting it may play a role in defense against a host. The chain is Immunoglobulin-binding protein EibD from Escherichia coli.